The primary structure comprises 548 residues: Sterol esterase TGL1 (548 aa).

M1 carries the post-translational modification N-acetylmethionine; partial. Residues 1 to 13 are Lumenal-facing; that stretch reads MYFPFLGRLSITD. The helical transmembrane segment at 14 to 34 threads the bilayer; the sequence is YIIVVLVYIESIISSVLKLIP. Topologically, residues 35 to 548 are cytoplasmic; that stretch reads QPMINLFEWL…TTALDALNKE (514 aa). An AB hydrolase-1 domain is found at 107 to 402; it reads VVYLHHGLLM…NYEHLDLIWG (296 aa). The GXSXG motif lies at 199–203; sequence GFSQG. The active-site Nucleophile is the S201. Residue K246 forms a Glycyl lysine isopeptide (Lys-Gly) (interchain with G-Cter in ubiquitin) linkage. Catalysis depends on charge relay system residues D369 and H396. Disordered regions lie at residues 449–477 and 496–516; these read TTHP…EADE and IDED…HKEQ. Residues S462 and S466 each carry the phosphoserine modification. Basic and acidic residues predominate over residues 502-516; it reads NEHQDDTEDQIHKEQ. S521 and S538 each carry phosphoserine. The disordered stretch occupies residues 528–548; it reads KDLRQLDANSSTTALDALNKE. T539 is subject to Phosphothreonine.

Belongs to the AB hydrolase superfamily. In terms of processing, not N-glycosylated.

Its subcellular location is the lipid droplet. The protein localises to the membrane. The enzyme catalyses a sterol ester + H2O = a sterol + a fatty acid + H(+). Functionally, mediates the hydrolysis of steryl esters (SE). Preferentially hydrolyzes ergosteryl and zymosteryl esters. Required for mobilization of SEs from lipid particles/droplets, thereby playing a central role in lipid metabolism and sterol homeostasis. Sterol intermediates stored in SE and set free by SE hydrolases are recycled to the sterol biosynthetic pathway and converted to the final product, ergosterol, in the endoplasmic reticulum. Also has weak lipase activity toward triglycerides at neutral pH, however, the physiological relevance of this activity is unclear. The sequence is that of Sterol esterase TGL1 (TGL1) from Saccharomyces cerevisiae (strain ATCC 204508 / S288c) (Baker's yeast).